We begin with the raw amino-acid sequence, 350 residues long: Putative transport protein YdbI (350 aa).

8 helical membrane-spanning segments follow: residues 18–38 (IFVV…LILL), 67–87 (VVIT…GFVF), 145–165 (ISTF…FLFE), 207–227 (FIIA…MHFP), 229–249 (LFGL…GVVI), 257–277 (IAYS…IFAI), 289–309 (LMSA…IFSE), and 311–331 (FFGI…LDIL).

The protein belongs to the autoinducer-2 exporter (AI-2E) (TC 2.A.86) family.

The protein localises to the cell membrane. In Bacillus subtilis (strain 168), this protein is Putative transport protein YdbI (ydbI).